Consider the following 360-residue polypeptide: Pyrimidine monooxygenase RutA (360 aa).

Residues 49-50 (IK), asparagine 115, glutamate 124, 140-141 (RY), and serine 190 contribute to the FMN site.

It belongs to the NtaA/SnaA/DszA monooxygenase family. RutA subfamily.

It carries out the reaction uracil + FMNH2 + NADH + O2 = (Z)-3-ureidoacrylate + FMN + NAD(+) + H2O + H(+). It catalyses the reaction thymine + FMNH2 + NADH + O2 = (Z)-2-methylureidoacrylate + FMN + NAD(+) + H2O + H(+). In terms of biological role, catalyzes the pyrimidine ring opening between N-3 and C-4 by an unusual flavin hydroperoxide-catalyzed mechanism, adding oxygen atoms in the process to yield ureidoacrylate peracid, that immediately reacts with FMN forming ureidoacrylate and FMN-N(5)-oxide. The FMN-N(5)-oxide reacts spontaneously with NADH to produce FMN. Requires the flavin reductase RutF to regenerate FMN in vivo. The protein is Pyrimidine monooxygenase RutA of Pseudomonas syringae pv. syringae (strain B728a).